The following is a 178-amino-acid chain: Bifunctional protein PyrR (178 aa).

Positions 99–111 (VILVDDVLFTGRT) match the PRPP-binding motif.

Belongs to the purine/pyrimidine phosphoribosyltransferase family. PyrR subfamily. In terms of assembly, homodimer and homohexamer; in equilibrium.

It carries out the reaction UMP + diphosphate = 5-phospho-alpha-D-ribose 1-diphosphate + uracil. In terms of biological role, regulates transcriptional attenuation of the pyrimidine nucleotide (pyr) operon by binding in a uridine-dependent manner to specific sites on pyr mRNA. This disrupts an antiterminator hairpin in the RNA and favors formation of a downstream transcription terminator, leading to a reduced expression of downstream genes. Also displays a weak uracil phosphoribosyltransferase activity which is not physiologically significant. This is Bifunctional protein PyrR from Ligilactobacillus salivarius (strain UCC118) (Lactobacillus salivarius).